The chain runs to 120 residues: Large ribosomal subunit protein uL18 (120 aa).

It belongs to the universal ribosomal protein uL18 family. In terms of assembly, part of the 50S ribosomal subunit; part of the 5S rRNA/L5/L18/L25 subcomplex. Contacts the 5S and 23S rRNAs.

This is one of the proteins that bind and probably mediate the attachment of the 5S RNA into the large ribosomal subunit, where it forms part of the central protuberance. This Bartonella quintana (strain Toulouse) (Rochalimaea quintana) protein is Large ribosomal subunit protein uL18.